A 125-amino-acid chain; its full sequence is Small ribosomal subunit protein uS11 (125 aa).

This sequence belongs to the universal ribosomal protein uS11 family. In terms of assembly, part of the 30S ribosomal subunit. Interacts with proteins S7 and S18. Binds to IF-3.

Its function is as follows. Located on the platform of the 30S subunit, it bridges several disparate RNA helices of the 16S rRNA. Forms part of the Shine-Dalgarno cleft in the 70S ribosome. In Aquifex aeolicus (strain VF5), this protein is Small ribosomal subunit protein uS11.